Here is a 362-residue protein sequence, read N- to C-terminus: Transcription factor Sox-18 (362 aa).

Residues 1-13 (MHRPEPSYCREEP) are compositionally biased toward basic and acidic residues. Residues 1–68 (MHRPEPSYCR…CEEKPGDPRI (68 aa)) are disordered. Residues 37-51 (PSSPPAPDSPTPSPQ) are compositionally biased toward pro residues. Positions 59-68 (CEEKPGDPRI) are enriched in basic and acidic residues. A DNA-binding region (HMG box) is located at residues 68-136 (IRRPMNAFMV…QHLQDHPNYK (69 aa)). Interaction with DNA regions lie at residues 70 to 83 (RPMNAFMVWAKDER) and 94 to 106 (HNAVLSKMLGQSW). A disordered region spans residues 129-159 (LQDHPNYKYRPRRKKQAKKLKRVDPSPLLRN). Residues 135-149 (YKYRPRRKKQAKKLK) show a composition bias toward basic residues. Positions 149-209 (KRVDPSPLLR…VVEPSEPAFF (61 aa)) are important for transcriptional activation. A Sox C-terminal domain is found at 235–361 (KTLREISLPY…TAMYYTPCIT (127 aa)). Residues 307–315 (NEFDQYLNM) carry the 9aaTAD motif.

It is found in the nucleus. Transcription factor. Binds to the consensus DNA sequence 5'-AACAAT-3'. Also binds 5'-CACAAT-3' and 5'-AATAAT-3' but with a lower affinity. Acts partially redundantly with sox7 during cardiogenesis, acting indirectly through nodal-signaling to induce mesodermal, organizer and endodermal tissues, which then interact to initiate cardiogenesis. Also acts as an antagonist of beta-catenin signaling. The sequence is that of Transcription factor Sox-18 from Xenopus tropicalis (Western clawed frog).